The chain runs to 563 residues: RUN and FYVE domain-containing protein 4 (563 aa).

The RUN domain maps to 33-166 (TETSAELHRL…VAFNLDLQRP (134 aa)). Disordered regions lie at residues 176–327 (SESR…TTEG) and 375–397 (KKSS…MQED). Basic and acidic residues-rich tracts occupy residues 196-205 (GFPEEVRCSR) and 263-284 (ETER…RKFL). Polar residues predominate over residues 285–295 (ENSTASIQQQR). The segment covering 297–312 (RAKDVKMQLTGRKVEG) has biased composition (basic and acidic residues). Positions 385–396 (EWTGVTSGTMQE) are enriched in polar residues. Positions 421 to 462 (QAQCQEQLRAQEAELQALQEQLSRCQKERALLQVKLEQKQQE) form a coiled coil. An FYVE-type zinc finger spans residues 428–558 (LRAQEAELQA…RCCPTCAQQE (131 aa)). Zn(2+)-binding residues include cysteine 513, cysteine 516, cysteine 529, cysteine 532, cysteine 537, cysteine 540, cysteine 551, and cysteine 554.

Forms homodimers (via coiled coil domain). Forms a ternary complex with RAB7A and LAMP2; the interaction with RAB7A is mediated by RUFY4 (via RUN and coiled coil domains). Interacts with GTP-, but not GDP-bound ARL8A and ARL8B. Interacts with dynactin/DCTN1 and the dynein intermediate chain DYNC1I1/2. In terms of tissue distribution, expressed in dendritic cells.

The protein resides in the cytoplasmic vesicle. It localises to the autophagosome. The protein localises to the lysosome. Its function is as follows. ARL8 effector that promotes the coupling of endolysosomes to dynein-dynactin for retrograde transport along microtubules. Acts by binding both GTP-bound ARL8 and dynein-dynactin. In nonneuronal cells, promotes concentration of endolysosomes in the juxtanuclear area. In hippocampal neurons, drives retrograde transport of endolysosomes from the axon to the soma. Positive regulator of macroautophagy in dendritic cells. Increases autophagic flux, probably by stimulating both autophagosome formation and facilitating tethering with lysosomes. Binds to phosphatidylinositol 3-phosphate (PtdIns3P) through its FYVE-type zinc finger. Positive regulator of osteosclast bone-resorbing activity, possibly by promoting late endosome-lysosome fusion by acting as an adapter protein between RAB7A on late endosomes and LAMP2 on primary lysosomes. This chain is RUN and FYVE domain-containing protein 4 (Rufy4), found in Mus musculus (Mouse).